A 400-amino-acid polypeptide reads, in one-letter code: MERWPWPSGGAWLLVAARALLQLLRSDLRLGRPLLAALALLAALDWLCQRLLPPPAALVVLAGAGWIALSRLARPPRLPVATRAVLITGCDTGFGKETAKKLDAMGFTVLATVLDLNGPGALELRARCSPRLKLLQMDLTKPEDISRVLEITKAHTASTGLWGLVNNAGLNMVVADVELSPVVTFRECMEVNFFGALELTKGLLPLLRHSRGRIVTVGSPAGDMPYPCLAAYGTSKAAIALLMDTFSCELLPWGIKVSIIQPGCFKTEAVTNVNLWEKRKQLLLANLPRELLQAYGEDYIEHLHGQFLNSLRMALPDLSPVVDAIIDALLAAQPRSRYYTGRGLGLMYFIHHYLPGGLRRRFLQNFFISHLLPRALRPGQPGPVHDTTQDPNPSPTVSAL.

82-111 provides a ligand contact to NAD(+); that stretch reads TRAVLITGCDTGFGKETAKKLDAMGFTVLA. Position 219 (S219) interacts with substrate. Residue Y232 is the Proton acceptor of the active site. The tract at residues 378–400 is disordered; it reads PGQPGPVHDTTQDPNPSPTVSAL. The segment covering 389 to 400 has biased composition (polar residues); that stretch reads QDPNPSPTVSAL.

This sequence belongs to the short-chain dehydrogenases/reductases (SDR) family. As to quaternary structure, interacts with ligand-free cytoplasmic NR3C2. As to expression, highly expressed in kidney, adrenal gland and distal colon, and at much lower levels in lung, hypothalamus, hippocampus, and midbrain.

The protein resides in the microsome. Its subcellular location is the endoplasmic reticulum. It carries out the reaction an 11beta-hydroxysteroid + NAD(+) = an 11-oxosteroid + NADH + H(+). The enzyme catalyses corticosterone + NAD(+) = 11-dehydrocorticosterone + NADH + H(+). The catalysed reaction is 11beta,17beta-dihydroxyandrost-4-ene-3-one + NAD(+) = 17beta-hydroxyandrost-4-ene-3,11-dione + NADH + H(+). It catalyses the reaction 11beta-hydroxyandrost-4-ene-3,17-dione + NAD(+) = androst-4-ene-3,11,17-trione + NADH + H(+). It participates in steroid metabolism. Its activity is regulated as follows. Inhibited by glycyrrhetinic acid. Induced by progesterone, through the Ihh signaling pathway. Functionally, catalyzes the conversion of biologically active 11beta-hydroxyglucocorticoids (11beta-hydroxysteroid) such as corticosterone, to inactive 11-ketoglucocorticoids (11-oxosteroid) such as 11-dehydrocorticosterone, in the presence of NAD(+). Functions as a dehydrogenase (oxidase), thereby decreasing the concentration of active glucocorticoids, thus protecting the nonselective mineralocorticoid receptor from occupation by glucocorticoids. Plays an important role in maintaining glucocorticoids balance during preimplantation and protects the fetus from excessive maternal corticosterone exposure. Catalyzes the oxidation of 11beta-hydroxytestosterone (11beta,17beta-dihydroxyandrost-4-ene-3-one) to 11-ketotestosterone (17beta-hydroxyandrost-4-ene-3,11-dione), a major bioactive androgen. Catalyzes the conversion of 11beta-hydroxyandrostenedione (11beta-hydroxyandrost-4-ene-3,17-dione) to 11-ketoandrostenedione (androst-4-ene-3,11,17-trione), which can be further metabolized to 11-ketotestosterone. Converts 7-beta-25-dihydroxycholesterol to 7-oxo-25-hydroxycholesterol in vitro. 7-beta-25-dihydroxycholesterol (not 7-oxo-25-hydroxycholesterol) acts as a ligand for the G-protein-coupled receptor (GPCR) Epstein-Barr virus-induced gene 2 (EBI2) and may thereby regulate immune cell migration. The polypeptide is 11-beta-hydroxysteroid dehydrogenase type 2 (Hsd11b2) (Rattus norvegicus (Rat)).